A 152-amino-acid polypeptide reads, in one-letter code: Ribosomal RNA large subunit methyltransferase H (152 aa).

S-adenosyl-L-methionine-binding positions include Leu69, Gly96, and 118–123; that span reads FGKLTF.

It belongs to the RNA methyltransferase RlmH family. In terms of assembly, homodimer.

The protein localises to the cytoplasm. It catalyses the reaction pseudouridine(1915) in 23S rRNA + S-adenosyl-L-methionine = N(3)-methylpseudouridine(1915) in 23S rRNA + S-adenosyl-L-homocysteine + H(+). In terms of biological role, specifically methylates the pseudouridine at position 1915 (m3Psi1915) in 23S rRNA. This Mesomycoplasma hyopneumoniae (strain 232) (Mycoplasma hyopneumoniae) protein is Ribosomal RNA large subunit methyltransferase H.